The sequence spans 546 residues: Flavin-dependent oxygenase ucdF (546 aa).

Positions 81-263 (QGRIPYYAVM…VNTTIRTFPD (183 aa)) constitute an FAD-binding PCMH-type domain.

This sequence belongs to the oxygen-dependent FAD-linked oxidoreductase family.

Nonribosomal peptide synthetase that mediates the biosynthesis of usterphenyllins and uscandidusins, p-terphenyl derivatives. The function of ucdF within the pathway still remains to be determined. UcdE further prenylates position C-14 of ring C of usterphenyllin B to form usterphenyllin A. The pathway begin with the biosynthesis of 4-hydroxyphenylpyruvate (HPPA) from L-tyrosine, possibly by the aminotransferase ucdG. The nonribosomal peptide synthetase ucdA then condenses two HPPA units to produce atromentin. The key step in this pathway is the reduction and dehydration of atromentin to form a terphenyl triol intermediate, performed by the NAD-dependent dehydrogenase ucdB. Further O-methylation by the methyltransferase ucdC forms terphenyllin carrying two methoxy moieties at C-9 and C-12, and subsequent dihydroxylation at C-3 of ring A and C-15 of ring C by the flavin-dependent oxygenase ucdD leads to 3,15-dihydroxyterphenyllin. Prenylation by ucdE at position C-5 of ring A forms usterphenyllin B, and is followed by a second prenylation at position C-14 of ring C to form usterphenyllin A. The following furan ring formation that leads to uscandidusins A and B was proven to be an unexpected spontaneous non-enzymatic reaction. The protein is Flavin-dependent oxygenase ucdF of Aspergillus ustus.